A 333-amino-acid polypeptide reads, in one-letter code: MPAVAGSLYMASQHKGVPPPLPPPPRPLPVINLGRLTMDSASRALAVRDIVLACRERGCFEVVNHGISRSCMNGALEAASEFFQLSTERKEEFASDDIRQPIRYDTSSRDGISMSRSFLKHYANPLDDWIKFWPTQPPTYREKMGEYAVETQRVSMQLMEAILQGLGLGPSYLQEKLEGGVQFVALNNYPQSSAKKADKIGLAPHSDYGFLTILLQSSPGLEVMHHEDDAWTSVPAIPGALHVHVGDHLEVLSNGQLKSLVHRAVLNPNESRISIASIHGLSMDEEVHCAEELVDEHHPKMYRGSSFQDFLDFLPANMNRYKRYVESLRIDKP.

The transit peptide at 1 to 43 directs the protein to the chloroplast; sequence MPAVAGSLYMASQHKGVPPPLPPPPRPLPVINLGRLTMDSASR. Residues 180 to 281 form the Fe2OG dioxygenase domain; sequence GVQFVALNNY…RISIASIHGL (102 aa). Fe cation-binding residues include histidine 205, aspartate 207, and histidine 262. Arginine 272 contributes to the 2-oxoglutarate binding site.

Belongs to the iron/ascorbate-dependent oxidoreductase family. The cofactor is Fe(2+). L-ascorbate is required as a cofactor. As to expression, expressed in roots.

Its subcellular location is the plastid. It localises to the chloroplast. It catalyses the reaction melatonin + 2-oxoglutarate + O2 = 2-hydroxymelatonin + succinate + CO2. Its function is as follows. Involved in melatonin degradation. Catalyzes the hydroxylation of melatonin to produce 2-hydroxymelatonin. This chain is 2-oxoglutarate-dependent dioxygenase 21, chloroplastic, found in Oryza sativa subsp. japonica (Rice).